A 971-amino-acid chain; its full sequence is Polyamine-modulated factor 1-binding protein 1 (971 aa).

Coiled-coil stretches lie at residues 37-69 (NKQY…LQAS), 117-229 (EKLH…ACSN), 282-325 (LHVE…LREE), 355-680 (QKLS…SAIQ), 706-827 (QDDL…DEKE), and 879-916 (IAKL…KAGT).

In terms of tissue distribution, expressed in testis and more specifically in ODF, the sperm tail specific cytoskeletal structure. Also expressed in epididymides and brain.

Its subcellular location is the cell projection. It is found in the cilium. It localises to the flagellum. In terms of biological role, required for normal spermatogenesis. It functions as a scaffold protein that attaches the sperm head-tail connecting piece to the nuclear envelope, thus maintaining sperm head and tail integrity. May also be involved in the general organization of cellular cytoskeleton. In Rattus norvegicus (Rat), this protein is Polyamine-modulated factor 1-binding protein 1 (Pmfbp1).